A 274-amino-acid polypeptide reads, in one-letter code: tRNA-cytidine(32) 2-sulfurtransferase (274 aa).

The PP-loop motif motif lies at 40 to 45 (SGGKDS). The [4Fe-4S] cluster site is built by C115, C118, and C206.

Belongs to the TtcA family. Homodimer. It depends on Mg(2+) as a cofactor. The cofactor is [4Fe-4S] cluster.

The protein resides in the cytoplasm. It carries out the reaction cytidine(32) in tRNA + S-sulfanyl-L-cysteinyl-[cysteine desulfurase] + AH2 + ATP = 2-thiocytidine(32) in tRNA + L-cysteinyl-[cysteine desulfurase] + A + AMP + diphosphate + H(+). Its pathway is tRNA modification. Its function is as follows. Catalyzes the ATP-dependent 2-thiolation of cytidine in position 32 of tRNA, to form 2-thiocytidine (s(2)C32). The sulfur atoms are provided by the cysteine/cysteine desulfurase (IscS) system. This chain is tRNA-cytidine(32) 2-sulfurtransferase, found in Pseudomonas syringae pv. tomato (strain ATCC BAA-871 / DC3000).